A 500-amino-acid polypeptide reads, in one-letter code: Inner membrane transporter YjeM (500 aa).

The Cytoplasmic portion of the chain corresponds to 1–10 (MTHTIKKMSL). Residues 11–31 (IGLILMIFTSVFGFANSPSAF) form a helical membrane-spanning segment. Topologically, residues 32-37 (YLMGYS) are periplasmic. Residues 38-58 (AIPWYIFSALLFFIPFALMMA) traverse the membrane as a helical segment. The Cytoplasmic segment spans residues 59–83 (EMGSAYRKEEGGIYSWMNNSVGPRY). The chain crosses the membrane as a helical span at residues 84–104 (AFIGTFMWFSSYVIWMVSTAA). Topologically, residues 105–124 (KIWVPFSTFVFGADMTQHWR) are periplasmic. A helical membrane pass occupies residues 125–145 (IAGLEPTQVVGLLAVGWMILV). At 146 to 163 (TCVAARGINKIARITAVG) the chain is on the cytoplasmic side. Residues 164–184 (GIAVMCLNLVLLLVSVAILLL) traverse the membrane as a helical segment. The Periplasmic portion of the chain corresponds to 185-209 (NGGHFAQEINFTSSPNPGYHSGLAM). The chain crosses the membrane as a helical span at residues 210-230 (LSFVVFAIFAYGGIEAVGGLV). Residues 231–243 (DKTEKPEKNFAKG) lie on the Cytoplasmic side of the membrane. Residues 244–264 (IVFAAIVISIGYSLAIFLWGV) traverse the membrane as a helical segment. Residues 265–308 (STNWQQILSNSAVNLGNITYILMSSLGTTLGNALNLSPEAAMTV) are Periplasmic-facing. A helical transmembrane segment spans residues 309-329 (GVWFARITGLSMFLAYTGAFF). Over 330–361 (TLSYSPLKAIIQGTPKALWPAPMTTLNANGMP) the chain is Cytoplasmic. The chain crosses the membrane as a helical span at residues 362–382 (ATAMWLQCVLVSLFILLVSFG). Over 383–394 (GDTASAFYNKLT) the chain is Periplasmic. A helical membrane pass occupies residues 395 to 415 (LMANVSMTLPYLFLALAFPFF). Topologically, residues 416-433 (KARQDLERPFVLFKTKAS) are cytoplasmic. A helical membrane pass occupies residues 434 to 454 (TLVATGVVVLVVTFANVFTII). Topologically, residues 455–462 (QPVIEAGD) are periplasmic. A helical transmembrane segment spans residues 463 to 483 (WDSALWMIGGPIFFSLLAMAI). Residues 484-500 (YQNYSSRMSADPEWAAE) are Cytoplasmic-facing.

The protein belongs to the amino acid-polyamine-organocation (APC) superfamily.

It is found in the cell inner membrane. In Salmonella typhi, this protein is Inner membrane transporter YjeM (yjeM).